Reading from the N-terminus, the 424-residue chain is Histidine--tRNA ligase (424 aa).

The protein belongs to the class-II aminoacyl-tRNA synthetase family. Homodimer.

It localises to the cytoplasm. The enzyme catalyses tRNA(His) + L-histidine + ATP = L-histidyl-tRNA(His) + AMP + diphosphate + H(+). In Staphylococcus epidermidis (strain ATCC 12228 / FDA PCI 1200), this protein is Histidine--tRNA ligase.